Consider the following 295-residue polypeptide: MHLDRSDSNGGSSRYTLDHEPPVVPIDLKTFRREIRKFHGKEITDIADNPQEYSDFVSAKARRTADVAQQYGIRRDSENARYFSYQLGNQCVGLMRTEGGFSMEEEFESKSWRDQFPGHQEITSTVDLQVAHPLVENAGDILLEAPTSEGRRTTVAELARGKPRGESRAAMMGFVEVDDCDMVLDPKQHPDKWTQTSAAEWRRKDKPPLYLRKFEDAETAQCSTKAALTRLTKMTSCDRILARFGRDGRAPSAKTGPHVMDRERKSVTNCHALTAIPIRCLGAKELERRVSLRPS.

The segment at 1–20 (MHLDRSDSNGGSSRYTLDHE) is disordered.

Belongs to the NopP family.

This Rhizobium fredii (Sinorhizobium fredii) protein is Host-inducible protein A.